The primary structure comprises 663 residues: Putative ankyrin repeat protein R219 (663 aa).

ANK repeat units lie at residues 91 to 118 (FRIK…GYKV), 119 to 148 (DFDS…KLSS), 200 to 229 (ANQQ…KDGT), 258 to 288 (DWHV…KINP), and 322 to 351 (YFSH…GITV).

This chain is Putative ankyrin repeat protein R219, found in Acanthamoeba polyphaga mimivirus (APMV).